We begin with the raw amino-acid sequence, 212 residues long: Orotate phosphoribosyltransferase (212 aa).

Residues R94, K98, H100, and 120–128 (EDLISTGGS) contribute to the 5-phospho-alpha-D-ribose 1-diphosphate site. Residue S124 participates in orotate binding.

This sequence belongs to the purine/pyrimidine phosphoribosyltransferase family. PyrE subfamily. As to quaternary structure, homodimer. Mg(2+) is required as a cofactor.

It catalyses the reaction orotidine 5'-phosphate + diphosphate = orotate + 5-phospho-alpha-D-ribose 1-diphosphate. It participates in pyrimidine metabolism; UMP biosynthesis via de novo pathway; UMP from orotate: step 1/2. Its function is as follows. Catalyzes the transfer of a ribosyl phosphate group from 5-phosphoribose 1-diphosphate to orotate, leading to the formation of orotidine monophosphate (OMP). The protein is Orotate phosphoribosyltransferase of Bacillus pumilus (strain SAFR-032).